Reading from the N-terminus, the 674-residue chain is CLK4-associating serine/arginine rich protein (674 aa).

Phosphoserine is present on S101. Disordered regions lie at residues 171-232 (TVAE…GMAD) and 258-674 (EKAM…HYRH). Over residues 182–214 (PEEEESAAEEESNSDEDEVIPDIDVEVDVDELN) the composition is skewed to acidic residues. Positions 265–283 (RRSRRQRREFREKRLRGRK) are enriched in basic residues. Phosphoserine occurs at positions 285 and 294. The span at 290 to 313 (ARRDSPTYDPYKRSPSESSSESRS) shows a compositional bias: basic and acidic residues. T327 is modified (phosphothreonine). S331 and S335 each carry phosphoserine. Pro residues predominate over residues 356 to 365 (PPAPPQPGGP). Low complexity predominate over residues 378 to 399 (SSSSSSSSASRTSSSRSSSRSS). 2 stretches are compositionally biased toward basic residues: residues 411–443 (SGRH…RRHS) and 481–492 (RGGRGLRHHSSS). Composition is skewed to low complexity over residues 493–506 (RSRS…SRSR) and 514–532 (HSPS…SQSP). S547 carries the phosphoserine modification. Phosphothreonine is present on T573. A coiled-coil region spans residues 585–647 (ALNRQFKADK…ERQYSRQSRS (63 aa)). Composition is skewed to basic and acidic residues over residues 590-617 (FKAD…ELRA) and 625-641 (KERE…ERQY). Over residues 642–651 (SRQSRSPSPR) the composition is skewed to low complexity. Residues 659–674 (SRRRSRSRSRSPHYRH) show a composition bias toward basic residues.

The protein belongs to the splicing factor SR family. In terms of assembly, probably interacts with CLK4. Phosphorylated in vitro by CLK4.

The protein resides in the nucleus. Probably functions as an alternative splicing regulator. May regulate the mRNA splicing of genes such as CLK1. May act by regulating members of the CLK kinase family. This chain is CLK4-associating serine/arginine rich protein (CLASRP), found in Homo sapiens (Human).